A 197-amino-acid chain; its full sequence is Protein lin-7 homolog C (197 aa).

A2 bears the N-acetylalanine mark. Residues 2-13 (AALGEPVRLERD) carry the Kinase interacting site motif. The L27 domain maps to 10–65 (LERDICRAIELLEKLQRSGEVPPQKLQALQRVLQSEFCNAVREVYEHVYETVDISS). One can recognise a PDZ domain in the interval 93–175 (VVELPKTEEG…KVKLVVRYTP (83 aa)).

Belongs to the lin-7 family. Forms a complex with CASK and APBA1 or CASKIN1. Component of the brain-specific heterotrimeric complex (LIN-10-LIN-2-LIN-7 complex) composed of at least APBA1, CASK, and LIN7, which associates with the motor protein KIF17 to transport vesicles along microtubules. Can also interact with other modular proteins containing protein-protein interaction domains like PALS1, PALS2, MPP7, DLG1, DLG2 and DLG3 through its L27 domain. Interacts with DLG4 and GRIN2B as well as CDH1 and CTNNB1, the channels KCNJ12/Kir2.2, KCNJ4/Kir2.3 and probably KCNJ2/Kir2.1 and SLC6A12/BGT-1 via its PDZ domain. The association of LIN7A with cadherin and beta-catenin is calcium-dependent, occurs at synaptic junctions and requires the actin cytoskeleton. Interacts with EGFR, ERBB2, ERBB3 and ERBB4 with both PDZ and KID domains. Associates with KIF17 via APBA1. Interacts with HTR4. Forms a tripartite complex composed of DLG1, MPP7 and LIN7 (LIN7A or LIN7C). Interacts with MAPK12.

The protein resides in the cell membrane. It is found in the basolateral cell membrane. Its subcellular location is the cell junction. It localises to the postsynaptic density membrane. The protein localises to the tight junction. The protein resides in the synapse. It is found in the synaptosome. In terms of biological role, plays a role in establishing and maintaining the asymmetric distribution of channels and receptors at the plasma membrane of polarized cells. Forms membrane-associated multiprotein complexes that may regulate delivery and recycling of proteins to the correct membrane domains. The tripartite complex composed of LIN7 (LIN7A, LIN7B or LIN7C), CASK and APBA1 associates with the motor protein KIF17 to transport vesicles containing N-methyl-D-aspartate (NMDA) receptor subunit NR2B along microtubules. This complex may have the potential to couple synaptic vesicle exocytosis to cell adhesion in brain. Ensures the proper localization of GRIN2B (subunit 2B of the NMDA receptor) to neuronal postsynaptic density and may function in localizing synaptic vesicles at synapses where it is recruited by beta-catenin and cadherin. Required to localize Kir2 channels, GABA transporter (SLC6A12) and EGFR/ERBB1, ERBB2, ERBB3 and ERBB4 to the basolateral membrane of epithelial cells. This Bos taurus (Bovine) protein is Protein lin-7 homolog C (LIN7C).